The primary structure comprises 92 residues: MAFVKRDNKNKKRFQQQNPLFKRKRFCRFTVAGVEQIDYKDLDTLKDFIGDNGKITPARLTGTKAHYQRQLDTAIKRARFLALLPYTDLHKN.

Belongs to the bacterial ribosomal protein bS18 family. As to quaternary structure, part of the 30S ribosomal subunit. Forms a tight heterodimer with protein bS6.

Binds as a heterodimer with protein bS6 to the central domain of the 16S rRNA, where it helps stabilize the platform of the 30S subunit. The sequence is that of Small ribosomal subunit protein bS18 from Cupriavidus taiwanensis (strain DSM 17343 / BCRC 17206 / CCUG 44338 / CIP 107171 / LMG 19424 / R1) (Ralstonia taiwanensis (strain LMG 19424)).